Reading from the N-terminus, the 265-residue chain is Glycosylphosphatidylinositol anchor biosynthesis protein 11 (265 aa).

Helical transmembrane passes span 49–69 (LLVV…SGLT) and 79–99 (GFLT…INLL). 2 N-linked (GlcNAc...) asparagine glycosylation sites follow: Asn-111 and Asn-112. 4 helical membrane passes run 137 to 157 (IFVS…MGAP), 166 to 186 (LYLS…LSNL), 209 to 229 (ILSS…PIPL), and 240 to 260 (ITLL…SLIV).

Belongs to the PIGF family.

It localises to the endoplasmic reticulum membrane. It participates in glycolipid biosynthesis; glycosylphosphatidylinositol-anchor biosynthesis. In terms of biological role, acts in the GPI biosynthetic pathway between GlcNAc-PI synthesis and GPI transfer to protein. The chain is Glycosylphosphatidylinositol anchor biosynthesis protein 11 (GPI11) from Candida albicans (strain SC5314 / ATCC MYA-2876) (Yeast).